Consider the following 162-residue polypeptide: MVWIDYAIIAVIAFSSLVSLIRGFVREALSLVTWGCAFFVASHYYTYLSVWFTGFEDELVRNGIAIAVLFIATLIVGAIVNFVIGQLVEKTGLSGTDRVLGVCFGALRGVLIVAAILFFLDSFTGVSKSEDWSKSQLIPQFSFIIRCFFDYLQSSSSFLPRA.

Residues 1 to 21 (MVWIDYAIIAVIAFSSLVSLI) traverse the membrane as a helical segment. Residues 22–31 (RGFVREALSL) are Cytoplasmic-facing. Residues 32-52 (VTWGCAFFVASHYYTYLSVWF) form a helical membrane-spanning segment. The Periplasmic portion of the chain corresponds to 53-63 (TGFEDELVRNG). A helical membrane pass occupies residues 64-84 (IAIAVLFIATLIVGAIVNFVI). Topologically, residues 85–98 (GQLVEKTGLSGTDR) are cytoplasmic. Residues 99 to 119 (VLGVCFGALRGVLIVAAILFF) form a helical membrane-spanning segment. Residues 120–162 (LDSFTGVSKSEDWSKSQLIPQFSFIIRCFFDYLQSSSSFLPRA) lie on the Periplasmic side of the membrane.

It localises to the cell inner membrane. In terms of biological role, required for colicin V production from plasmid IncFI ColV3-K30. This chain is Colicin V production protein (cvpA), found in Escherichia coli (strain K12).